The sequence spans 208 residues: Superoxide dismutase [Mn] 2 (208 aa).

Positions 28, 83, 165, and 169 each coordinate Mn(2+).

Belongs to the iron/manganese superoxide dismutase family. In terms of assembly, homodimer. Mn(2+) is required as a cofactor.

It catalyses the reaction 2 superoxide + 2 H(+) = H2O2 + O2. In terms of biological role, destroys superoxide anion radicals which are normally produced within the cells and which are toxic to biological systems. The polypeptide is Superoxide dismutase [Mn] 2 (sodA2) (Bacillus anthracis).